The primary structure comprises 841 residues: Taste receptor type 1 member 1 (841 aa).

The signal sequence occupies residues 1 to 20 (MLLCTARLVGLQLLISCCWA). Residues 21-567 (FACHSTESSP…VFLALREHTS (547 aa)) lie on the Extracellular side of the membrane. 6 N-linked (GlcNAc...) asparagine glycosylation sites follow: Asn87, Asn88, Asn95, Asn291, Asn479, and Asn529. Residues 568–588 (WVLLAANTLLLLLLLGTAGLF) form a helical membrane-spanning segment. Residues 589–603 (AWHLDTPVVRSAGGR) are Cytoplasmic-facing. Residues 604 to 624 (LCFLMLGSLAAGSGSLYGFFG) form a helical membrane-spanning segment. At 625–639 (EPTRPACLLRQALFA) the chain is on the extracellular side. Residues 640–660 (LGFTIFLSCLTVRSFQLIIIF) traverse the membrane as a helical segment. Residues 661–680 (KFSTKVPTFYHAWVQNHGAG) are Cytoplasmic-facing. A helical membrane pass occupies residues 681–701 (LFVMISSAAQLLICLTWLVVW). At 702-725 (TPLPAREYQRFPHLVMLECTETNS) the chain is on the extracellular side. The chain crosses the membrane as a helical span at residues 726 to 746 (LGFILAFLYNGLLSISAFACS). Topologically, residues 747–761 (YLGKDLPENYNEAKC) are cytoplasmic. Residues 762-782 (VTFSLLFNFVSWIAFFTTASV) form a helical membrane-spanning segment. Residues 783–795 (YDGKYLPAANMMA) are Extracellular-facing. The chain crosses the membrane as a helical span at residues 796–816 (GLSSLSSGFGGYFLPKCYVIL). The Cytoplasmic segment spans residues 817-841 (CRPDLNSTEHFQASIQDYTRRCGST).

The protein belongs to the G-protein coupled receptor 3 family. TAS1R subfamily. As to quaternary structure, forms heterodimers with TAS1R3.

It localises to the cell membrane. Its function is as follows. Putative taste receptor. TAS1R1/TAS1R3 responds to the umami taste stimulus (the taste of monosodium glutamate). Sequence differences within and between species can significantly influence the selectivity and specificity of taste responses. This Homo sapiens (Human) protein is Taste receptor type 1 member 1 (TAS1R1).